The chain runs to 252 residues: Geranylgeranylglyceryl phosphate synthase (252 aa).

Mg(2+) contacts are provided by D27 and T57. Residues 175 to 181 (YLEAGSG), 206 to 207 (GG), and 228 to 229 (GN) each bind sn-glycerol 1-phosphate.

The protein belongs to the GGGP/HepGP synthase family. Group II subfamily. Requires Mg(2+) as cofactor.

The protein localises to the cytoplasm. The catalysed reaction is sn-glycerol 1-phosphate + (2E,6E,10E)-geranylgeranyl diphosphate = sn-3-O-(geranylgeranyl)glycerol 1-phosphate + diphosphate. Its pathway is membrane lipid metabolism; glycerophospholipid metabolism. Functionally, prenyltransferase that catalyzes the transfer of the geranylgeranyl moiety of geranylgeranyl diphosphate (GGPP) to the C3 hydroxyl of sn-glycerol-1-phosphate (G1P). This reaction is the first ether-bond-formation step in the biosynthesis of archaeal membrane lipids. In Metallosphaera sedula (strain ATCC 51363 / DSM 5348 / JCM 9185 / NBRC 15509 / TH2), this protein is Geranylgeranylglyceryl phosphate synthase.